A 540-amino-acid polypeptide reads, in one-letter code: Chaperonin GroEL (540 aa).

ATP is bound by residues 29-32 (TLGP), 86-90 (DGTTT), G413, 476-478 (NAA), and D492.

Belongs to the chaperonin (HSP60) family. Forms a cylinder of 14 subunits composed of two heptameric rings stacked back-to-back. Interacts with the co-chaperonin GroES.

The protein resides in the cytoplasm. It catalyses the reaction ATP + H2O + a folded polypeptide = ADP + phosphate + an unfolded polypeptide.. Its function is as follows. Together with its co-chaperonin GroES, plays an essential role in assisting protein folding. The GroEL-GroES system forms a nano-cage that allows encapsulation of the non-native substrate proteins and provides a physical environment optimized to promote and accelerate protein folding. This Streptococcus anginosus protein is Chaperonin GroEL.